Here is a 232-residue protein sequence, read N- to C-terminus: Large ribosomal subunit protein uL1 (232 aa).

The protein belongs to the universal ribosomal protein uL1 family. Part of the 50S ribosomal subunit.

Its function is as follows. Binds directly to 23S rRNA. The L1 stalk is quite mobile in the ribosome, and is involved in E site tRNA release. In terms of biological role, protein L1 is also a translational repressor protein, it controls the translation of the L11 operon by binding to its mRNA. This chain is Large ribosomal subunit protein uL1, found in Lysinibacillus sphaericus (strain C3-41).